The following is a 170-amino-acid chain: ATP synthase F(1) complex subunit delta, mitochondrial (170 aa).

A mitochondrion-targeting transit peptide spans 1–33 (MIRSIIKSSNNLLKSNVAINSNKRFFATEASAT).

This sequence belongs to the ATPase epsilon chain family. In terms of assembly, component of the ATP synthase complex composed at least of ATP5F1A/subunit alpha, ATP5F1B/subunit beta, ATP5MC1/subunit c (homooctomer), MT-ATP6/subunit a, MT-ATP8/subunit 8, ATP5ME/subunit e, ATP5MF/subunit f, ATP5MG/subunit g, ATP5MK/subunit k, ATP5MJ/subunit j, ATP5F1C/subunit gamma, ATP5F1D/subunit delta, ATP5F1E/subunit epsilon, ATP5PF/subunit F6, ATP5PB/subunit b, ATP5PD/subunit d, ATP5PO/subunit OSCP. ATP synthase complex consists of a soluble F(1) head domain (subunits alpha(3) and beta(3)) - the catalytic core - and a membrane F(0) domain - the membrane proton channel (subunits c, a, 8, e, f, g, k and j). These two domains are linked by a central stalk (subunits gamma, delta, and epsilon) rotating inside the F1 region and a stationary peripheral stalk (subunits F6, b, d, and OSCP).

The protein localises to the mitochondrion. It is found in the mitochondrion inner membrane. Its function is as follows. Subunit delta, of the mitochondrial membrane ATP synthase complex (F(1)F(0) ATP synthase or Complex V) that produces ATP from ADP in the presence of a proton gradient across the membrane which is generated by electron transport complexes of the respiratory chain. ATP synthase complex consist of a soluble F(1) head domain - the catalytic core - and a membrane F(1) domain - the membrane proton channel. These two domains are linked by a central stalk rotating inside the F(1) region and a stationary peripheral stalk. During catalysis, ATP synthesis in the catalytic domain of F(1) is coupled via a rotary mechanism of the central stalk subunits to proton translocation. In vivo, can only synthesize ATP although its ATP hydrolase activity can be activated artificially in vitro. With the central stalk subunit gamma, is essential for the biogenesis of F(1) catalytic part of the ATP synthase complex namely in the formation of F1 assembly intermediate. This chain is ATP synthase F(1) complex subunit delta, mitochondrial, found in Dictyostelium discoideum (Social amoeba).